The following is a 434-amino-acid chain: Serine hydroxymethyltransferase (434 aa).

(6S)-5,6,7,8-tetrahydrofolate is bound by residues Leu133 and 137-139 (GHL). Lys242 bears the N6-(pyridoxal phosphate)lysine mark. (6S)-5,6,7,8-tetrahydrofolate is bound at residue 366-368 (SPF).

The protein belongs to the SHMT family. In terms of assembly, homodimer. Pyridoxal 5'-phosphate serves as cofactor.

It is found in the cytoplasm. It carries out the reaction (6R)-5,10-methylene-5,6,7,8-tetrahydrofolate + glycine + H2O = (6S)-5,6,7,8-tetrahydrofolate + L-serine. Its pathway is one-carbon metabolism; tetrahydrofolate interconversion. The protein operates within amino-acid biosynthesis; glycine biosynthesis; glycine from L-serine: step 1/1. Catalyzes the reversible interconversion of serine and glycine with tetrahydrofolate (THF) serving as the one-carbon carrier. This reaction serves as the major source of one-carbon groups required for the biosynthesis of purines, thymidylate, methionine, and other important biomolecules. Also exhibits THF-independent aldolase activity toward beta-hydroxyamino acids, producing glycine and aldehydes, via a retro-aldol mechanism. The polypeptide is Serine hydroxymethyltransferase (Erythrobacter litoralis (strain HTCC2594)).